Consider the following 199-residue polypeptide: Probable chemoreceptor glutamine deamidase CheD (199 aa).

The protein belongs to the CheD family.

It catalyses the reaction L-glutaminyl-[protein] + H2O = L-glutamyl-[protein] + NH4(+). Functionally, probably deamidates glutamine residues to glutamate on methyl-accepting chemotaxis receptors (MCPs), playing an important role in chemotaxis. This is Probable chemoreceptor glutamine deamidase CheD from Cereibacter sphaeroides (strain ATCC 17029 / ATH 2.4.9) (Rhodobacter sphaeroides).